The sequence spans 498 residues: Cytochrome P450 monooxygenase ltmP (498 aa).

An N-terminal signal peptide occupies residues 1-21 (MLMLHAVPVGICLLLWYVVYG). The N-linked (GlcNAc...) asparagine glycan is linked to N420. C435 contributes to the heme binding site.

This sequence belongs to the cytochrome P450 family. Heme is required as a cofactor.

It participates in secondary metabolite biosynthesis. Functionally, cytochrome P450 monooxygenase; part of the gene clusters that mediates the biosynthesis of lolitrems, indole-diterpene mycotoxins that are potent tremorgens in mammals, and are synthesized by clavicipitaceous fungal endophytes in association with their grass hosts. The geranylgeranyl diphosphate (GGPP) synthase ltmG is proposed to catalyze the first step in lolitrem biosynthesis. LtmG catalyzes a series of iterative condensations of isopentenyl diphosphate (IPP) with dimethylallyl diphosphate (DMAPP), geranyl diphosphate (GPP), and farnesyl diphosphate (FPP), to form GGPP. GGPP then condenses with indole-3-glycerol phosphate to form 3-geranylgeranylindole, an acyclic intermediate, to be incorporated into paxilline. Either ltmG or ltmC could be responsible for this step, as both are putative prenyl transferases. The FAD-dependent monooxygenase ltmM then catalyzes the epoxidation of the two terminal alkenes of the geranylgeranyl moiety, which is subsequently cyclized by ltmB, to paspaline. The cytochrome P450 monooxygenases ltmQ and ltmP can sequentially oxidize paspaline to terpendole E and terpendole F. Alternatively, ltmP converts paspaline to an intermediate which is oxidized by ltmQ to terpendole F. LtmF, ltmK, ltmE and ltmJ appear to be unique to the epichloe endophytes. The prenyltransferase ltmF is involved in the 27-hydroxyl-O-prenylation. The cytochrome P450 monooxygenase ltmK is required for the oxidative acetal ring formation. The multi-functional prenyltransferase ltmE is required for C20- and C21-prenylations of the indole ring of paspalanes and acts together with the cytochrome P450 monooxygenase ltmJ to yield lolitremanes by multiple oxidations and ring closures. The stereoisomer pairs of lolitriol and lolitrem N or lolitrem B and lolitrem F may be attributed to variations in the way in which ring closure can occur under the action of ltmJ. While the major product of this pathway is lolitrem B, the prenyl transferases and cytochrome P450 monooxygenases identified in this pathway have a remarkable versatility in their regio- and stereo-specificities to generate a diverse range of metabolites that are products of a metabolic grid rather than a linear pathway. This is Cytochrome P450 monooxygenase ltmP from Epichloe festucae var. lolii (Neotyphodium lolii).